Consider the following 142-residue polypeptide: Transcription antitermination protein NusB (142 aa).

The protein belongs to the NusB family.

In terms of biological role, involved in transcription antitermination. Required for transcription of ribosomal RNA (rRNA) genes. Binds specifically to the boxA antiterminator sequence of the ribosomal RNA (rrn) operons. In Streptococcus uberis (strain ATCC BAA-854 / 0140J), this protein is Transcription antitermination protein NusB.